The primary structure comprises 376 residues: Putative glutamate--cysteine ligase 2-1 (376 aa).

Belongs to the glutamate--cysteine ligase type 2 family. YbdK subfamily.

The catalysed reaction is L-cysteine + L-glutamate + ATP = gamma-L-glutamyl-L-cysteine + ADP + phosphate + H(+). Functionally, ATP-dependent carboxylate-amine ligase which exhibits weak glutamate--cysteine ligase activity. The protein is Putative glutamate--cysteine ligase 2-1 of Rubrobacter xylanophilus (strain DSM 9941 / JCM 11954 / NBRC 16129 / PRD-1).